An 837-amino-acid polypeptide reads, in one-letter code: Zinc fingers and homeoboxes protein 2 (837 aa).

Positions 27-77 (VDRAKEKGIGTPQPDVAKDSWAAELENSSKENEVIEVKSMGESQSKKLQGG) are interaction with EFNB1. The residue at position 37 (threonine 37) is a Phosphothreonine. A Glycyl lysine isopeptide (Lys-Gly) (interchain with G-Cter in SUMO2) cross-link involves residue lysine 64. 2 consecutive C2H2-type zinc fingers follow at residues 78–101 (YECKYCPYSTQNLNEFTEHVDMQH) and 110–133 (YVCAECNFTTKKYDSLSDHNSKFH). Residues 164 to 180 (SITTSGPGTGDSDSGIS) show a composition bias toward low complexity. Positions 164 to 204 (SITTSGPGTGDSDSGISVSKTPIMKPGKPKADAKKVPKKPE) are disordered. Residues 192-204 (PKADAKKVPKKPE) show a composition bias toward basic and acidic residues. The tract at residues 195-358 (DAKKVPKKPE…PAQLAPTKVT (164 aa)) is required for homodimerization. Threonine 207 is modified (phosphothreonine). DNA-binding regions (homeobox) lie at residues 263-324 (NTTK…WSPE), 439-501 (TPAS…IVHI), 530-591 (PQKF…EQAV), and 628-690 (SPSP…TVKW). Positions 263-446 (NTTKYNSALD…PLTPASDRKK (184 aa)) are required for repressor activity. The required for interaction with NFYA stretch occupies residues 263–497 (NTTKYNSALD…SDHRYRCQRG (235 aa)). Residues 317 to 446 (HGISWSPEEV…PLTPASDRKK (130 aa)) form a required for nuclear localization region. The interval 404-445 (GQKRPLVTPQAAPEPKRPHIAQVPEPPPKVANPPLTPASDRK) is disordered. Positions 427–439 (PEPPPKVANPPLT) are enriched in pro residues. Residue lysine 455 forms a Glycyl lysine isopeptide (Lys-Gly) (interchain with G-Cter in SUMO2) linkage. A disordered region spans residues 755–837 (PAKDCLPAKP…DCVPAEAGQA (83 aa)). Serine 825 and serine 827 each carry phosphoserine.

The protein belongs to the ZHX family. In terms of assembly, homodimer (via homeobox domain). Heterodimer with ZHX1 (via homeobox domain 1). Heterodimer with ZHX3 (via homeobox domain 1). Heterodimerization with ZHX1 is not necessary for repressor activity. Interacts (via homeobox domain) with NFYA (via N-terminus). Interacts with EFNB1 intracellular domain peptide; the interaction enhances ZHX2 transcriptional repression activity. As to expression, ubiquitously expressed. Expressed in podocytes.

It localises to the nucleus. In terms of biological role, acts as a transcriptional repressor. Represses the promoter activity of the CDC25C gene stimulated by NFYA. May play a role in retinal development where it regulates the composition of bipolar cell populations, by promoting differentiation of bipolar OFF-type cells. In the brain, may promote maintenance and suppress differentiation of neural progenitor cells in the developing cortex. The chain is Zinc fingers and homeoboxes protein 2 (ZHX2) from Homo sapiens (Human).